A 626-amino-acid chain; its full sequence is tRNA uridine 5-carboxymethylaminomethyl modification enzyme MnmG (626 aa).

Residue Gly-13 to Gly-18 coordinates FAD. Residue Gly-273–Phe-287 participates in NAD(+) binding.

The protein belongs to the MnmG family. Homodimer. Heterotetramer of two MnmE and two MnmG subunits. The cofactor is FAD.

The protein resides in the cytoplasm. NAD-binding protein involved in the addition of a carboxymethylaminomethyl (cmnm) group at the wobble position (U34) of certain tRNAs, forming tRNA-cmnm(5)s(2)U34. In Acinetobacter baumannii (strain ATCC 17978 / DSM 105126 / CIP 53.77 / LMG 1025 / NCDC KC755 / 5377), this protein is tRNA uridine 5-carboxymethylaminomethyl modification enzyme MnmG.